The sequence spans 522 residues: Subtilisin-like protease 10 (522 aa).

Residues 1–19 (MFFFKGVVAVLSFFSAVNA) form the signal peptide. The propeptide occupies 20-117 (APFMKPNNGT…VERDQIGTSQ (98 aa)). One can recognise an Inhibitor I9 domain in the interval 36 to 113 (SYIVLLKRDI…HVAHVERDQI (78 aa)). Residues 127–405 (NWGLGRLSNN…KLLVNGANGT (279 aa)) form the Peptidase S8 domain. Catalysis depends on charge relay system residues Asp-159 and His-190. N-linked (GlcNAc...) asparagine glycosylation is present at Asn-251. Ser-348 functions as the Charge relay system in the catalytic mechanism. Polar residues predominate over residues 384 to 397 (ASVKNPGPNTTNKL). The segment at 384–515 (ASVKNPGPNT…GWNRPMWWNR (132 aa)) is disordered. Asn-392 and Asn-403 each carry an N-linked (GlcNAc...) asparagine glycan. Pro residues predominate over residues 432 to 459 (SQNPPPGQNPPPGQNPPPEQPAPSPPAN).

It belongs to the peptidase S8 family.

It localises to the secreted. Its function is as follows. Secreted subtilisin-like serine protease with keratinolytic activity that contributes to pathogenicity. The protein is Subtilisin-like protease 10 (SUB10) of Arthroderma benhamiae (strain ATCC MYA-4681 / CBS 112371) (Trichophyton mentagrophytes).